A 309-amino-acid chain; its full sequence is Dehydrogenase/reductase SDR family member 7B (309 aa).

Over 1-5 (MERAL) the chain is Cytoplasmic. Residues 6–26 (GVGIGPLAAGTVGLLILLKVI) form a helical; Signal-anchor for type II membrane protein membrane-spanning segment. Residues 27–271 (QRLRRRPNIQ…LKAVCQKKKD (245 aa)) lie on the Lumenal side of the membrane. Serine 47 and leucine 49 together coordinate NAD(+). Serine 179 contributes to the substrate binding site. NAD(+) contacts are provided by tyrosine 192, lysine 196, and threonine 227. Tyrosine 192 serves as the catalytic Proton acceptor.

It belongs to the short-chain dehydrogenases/reductases (SDR) family.

The protein localises to the endoplasmic reticulum membrane. Its function is as follows. Putative oxidoreductase. The protein is Dehydrogenase/reductase SDR family member 7B (dhrs7b) of Danio rerio (Zebrafish).